Here is a 337-residue protein sequence, read N- to C-terminus: Gastrula zinc finger protein XlCGF26.1 (337 aa).

12 consecutive C2H2-type zinc fingers follow at residues 6 to 28, 34 to 56, 62 to 84, 90 to 112, 118 to 140, 146 to 168, 174 to 196, 202 to 224, 230 to 252, 258 to 280, 286 to 309, and 315 to 337; these read FDCT…YKIH, FICA…SKIH, FPCT…NKIH, FTCT…VKIH, FTCT…NKIH, FTCT…FKIH, and FSCT…KRTH.

It belongs to the krueppel C2H2-type zinc-finger protein family.

It localises to the nucleus. In terms of biological role, may be involved in transcriptional regulation. The protein is Gastrula zinc finger protein XlCGF26.1 of Xenopus laevis (African clawed frog).